The primary structure comprises 280 residues: 4-diphosphocytidyl-2-C-methyl-D-erythritol kinase (280 aa).

Lys8 is an active-site residue. An ATP-binding site is contributed by 91–101 (PVAAGLAGGST). The active site involves Asp133.

Belongs to the GHMP kinase family. IspE subfamily.

The enzyme catalyses 4-CDP-2-C-methyl-D-erythritol + ATP = 4-CDP-2-C-methyl-D-erythritol 2-phosphate + ADP + H(+). It participates in isoprenoid biosynthesis; isopentenyl diphosphate biosynthesis via DXP pathway; isopentenyl diphosphate from 1-deoxy-D-xylulose 5-phosphate: step 3/6. Catalyzes the phosphorylation of the position 2 hydroxy group of 4-diphosphocytidyl-2C-methyl-D-erythritol. The protein is 4-diphosphocytidyl-2-C-methyl-D-erythritol kinase of Clostridium botulinum (strain Okra / Type B1).